The following is a 173-amino-acid chain: Crossover junction endodeoxyribonuclease RuvC (173 aa).

Active-site residues include Asp8, Glu69, and Asp141. Residues Asp8, Glu69, and Asp141 each contribute to the Mg(2+) site.

It belongs to the RuvC family. In terms of assembly, homodimer which binds Holliday junction (HJ) DNA. The HJ becomes 2-fold symmetrical on binding to RuvC with unstacked arms; it has a different conformation from HJ DNA in complex with RuvA. In the full resolvosome a probable DNA-RuvA(4)-RuvB(12)-RuvC(2) complex forms which resolves the HJ. It depends on Mg(2+) as a cofactor.

The protein localises to the cytoplasm. It catalyses the reaction Endonucleolytic cleavage at a junction such as a reciprocal single-stranded crossover between two homologous DNA duplexes (Holliday junction).. In terms of biological role, the RuvA-RuvB-RuvC complex processes Holliday junction (HJ) DNA during genetic recombination and DNA repair. Endonuclease that resolves HJ intermediates. Cleaves cruciform DNA by making single-stranded nicks across the HJ at symmetrical positions within the homologous arms, yielding a 5'-phosphate and a 3'-hydroxyl group; requires a central core of homology in the junction. The consensus cleavage sequence is 5'-(A/T)TT(C/G)-3'. Cleavage occurs on the 3'-side of the TT dinucleotide at the point of strand exchange. HJ branch migration catalyzed by RuvA-RuvB allows RuvC to scan DNA until it finds its consensus sequence, where it cleaves and resolves the cruciform DNA. The protein is Crossover junction endodeoxyribonuclease RuvC of Stenotrophomonas maltophilia (strain K279a).